The primary structure comprises 32 residues: U3-theraphotoxin-Hhn1r (32 aa).

3 disulfides stabilise this stretch: C2-C15, C9-C20, and C14-C27.

The protein belongs to the neurotoxin 10 (Hwtx-1) family. 16 (Hntx-8) subfamily. As to expression, expressed by the venom gland.

Its subcellular location is the secreted. Its function is as follows. Ion channel inhibitor. In Cyriopagopus hainanus (Chinese bird spider), this protein is U3-theraphotoxin-Hhn1r.